A 488-amino-acid chain; its full sequence is Probable malate:quinone oxidoreductase (488 aa).

The protein belongs to the MQO family. FAD is required as a cofactor.

The catalysed reaction is (S)-malate + a quinone = a quinol + oxaloacetate. It participates in carbohydrate metabolism; tricarboxylic acid cycle; oxaloacetate from (S)-malate (quinone route): step 1/1. The polypeptide is Probable malate:quinone oxidoreductase (Neisseria meningitidis serogroup C (strain 053442)).